The chain runs to 312 residues: Methionyl-tRNA formyltransferase (312 aa).

(6S)-5,6,7,8-tetrahydrofolate is bound at residue 109–112; it reads SLLP.

This sequence belongs to the Fmt family.

The catalysed reaction is L-methionyl-tRNA(fMet) + (6R)-10-formyltetrahydrofolate = N-formyl-L-methionyl-tRNA(fMet) + (6S)-5,6,7,8-tetrahydrofolate + H(+). Attaches a formyl group to the free amino group of methionyl-tRNA(fMet). The formyl group appears to play a dual role in the initiator identity of N-formylmethionyl-tRNA by promoting its recognition by IF2 and preventing the misappropriation of this tRNA by the elongation apparatus. This is Methionyl-tRNA formyltransferase from Listeria monocytogenes serovar 1/2a (strain ATCC BAA-679 / EGD-e).